The chain runs to 281 residues: 2-hydroxymuconate semialdehyde hydrolase (281 aa).

A disordered region spans residues 30 to 55 (FPALLIHGSGPASPPGPTGAGSFRSS). Positions 31–261 (PALLIHGSGP…QCGHWTQIEH (231 aa)) constitute an AB hydrolase-1 domain. Active-site residues include Ser-106, Asp-227, and His-255.

This sequence belongs to the DmpD/TodF/XylF esterase family.

The catalysed reaction is (2Z,4E)-2-hydroxy-6-oxohexa-2,4-dienoate + H2O = 2-oxopent-4-enoate + formate + H(+). The protein operates within aromatic compound metabolism; benzoate degradation via hydroxylation. Catalyzes the conversion of 2-hydroxymuconate semialdehyde to 2-hydroxypent-2,4-dienoate. This chain is 2-hydroxymuconate semialdehyde hydrolase (xylF), found in Pseudomonas putida (Arthrobacter siderocapsulatus).